The sequence spans 605 residues: Elongation factor 4 (605 aa).

Positions 11 to 193 (KCIRNFSIIA…QIVTRISPPQ (183 aa)) constitute a tr-type G domain. GTP contacts are provided by residues 23 to 28 (DHGKST) and 140 to 143 (NKVD).

This sequence belongs to the TRAFAC class translation factor GTPase superfamily. Classic translation factor GTPase family. LepA subfamily.

It localises to the cell membrane. The enzyme catalyses GTP + H2O = GDP + phosphate + H(+). Functionally, required for accurate and efficient protein synthesis under certain stress conditions. May act as a fidelity factor of the translation reaction, by catalyzing a one-codon backward translocation of tRNAs on improperly translocated ribosomes. Back-translocation proceeds from a post-translocation (POST) complex to a pre-translocation (PRE) complex, thus giving elongation factor G a second chance to translocate the tRNAs correctly. Binds to ribosomes in a GTP-dependent manner. This is Elongation factor 4 from Aster yellows witches'-broom phytoplasma (strain AYWB).